Reading from the N-terminus, the 397-residue chain is 3-ketoacyl-CoA thiolase, mitochondrial (397 aa).

The N-terminal 16 residues, 1-16 (MALLRGVFIVAAKRTP), are a transit peptide targeting the mitochondrion; not cleaved. K25 is modified (N6-acetyllysine; alternate). K25 is subject to N6-succinyllysine; alternate. At S28 the chain carries Phosphoserine. Residue K45 is modified to N6-succinyllysine. Catalysis depends on C92, which acts as the Acyl-thioester intermediate. At T119 the chain carries Phosphothreonine. S121 is modified (phosphoserine). Residue Y127 is modified to Phosphotyrosine. Phosphothreonine is present on T136. N6-acetyllysine; alternate occurs at positions 137, 143, 158, 171, 191, and 209. Residues K137, K143, K158, K171, K191, and K209 each carry the N6-succinyllysine; alternate modification. N6-succinyllysine is present on residues K211, K212, and K214. CoA-binding residues include R224 and T227. K234 bears the N6-acetyllysine; alternate mark. K234 bears the N6-succinyllysine; alternate mark. Position 240 is an N6-succinyllysine (K240). N6-acetyllysine is present on K241. S251 is a CoA binding site. N6-acetyllysine occurs at positions 269 and 270. At K305 the chain carries N6-acetyllysine; alternate. K305 is modified (N6-succinyllysine; alternate). At S310 the chain carries Phosphoserine. K312 bears the N6-acetyllysine; alternate mark. K312 is subject to N6-succinyllysine; alternate. The residue at position 340 (K340) is an N6-acetyllysine. S344 carries the phosphoserine modification. The residue at position 375 (K375) is an N6-acetyllysine. The active-site Proton donor/acceptor is the C382.

Belongs to the thiolase-like superfamily. Thiolase family. Homotetramer. Interacts with BNIP3.

It is found in the mitochondrion. It carries out the reaction an acyl-CoA + acetyl-CoA = a 3-oxoacyl-CoA + CoA. The enzyme catalyses 2 acetyl-CoA = acetoacetyl-CoA + CoA. It catalyses the reaction acetyl-CoA + H2O = acetate + CoA + H(+). The catalysed reaction is propanoyl-CoA + H2O = propanoate + CoA + H(+). It carries out the reaction butanoyl-CoA + H2O = butanoate + CoA + H(+). The enzyme catalyses hexanoyl-CoA + H2O = hexanoate + CoA + H(+). It catalyses the reaction octanoyl-CoA + H2O = octanoate + CoA + H(+). The catalysed reaction is decanoyl-CoA + H2O = decanoate + CoA + H(+). It carries out the reaction dodecanoyl-CoA + H2O = dodecanoate + CoA + H(+). The enzyme catalyses tetradecanoyl-CoA + H2O = tetradecanoate + CoA + H(+). It catalyses the reaction hexadecanoyl-CoA + H2O = hexadecanoate + CoA + H(+). Its pathway is lipid metabolism; fatty acid beta-oxidation. Its function is as follows. In the production of energy from fats, this is one of the enzymes that catalyzes the last step of the mitochondrial beta-oxidation pathway, an aerobic process breaking down fatty acids into acetyl-CoA. Using free coenzyme A/CoA, catalyzes the thiolytic cleavage of medium- to long-chain unbranched 3-oxoacyl-CoAs into acetyl-CoA and a fatty acyl-CoA shortened by two carbon atoms. Also catalyzes the condensation of two acetyl-CoA molecules into acetoacetyl-CoA and could be involved in the production of ketone bodies. Also displays hydrolase activity on various fatty acyl-CoAs. Thereby, could be responsible for the production of acetate in a side reaction to beta-oxidation. Abolishes BNIP3-mediated apoptosis and mitochondrial damage. The protein is 3-ketoacyl-CoA thiolase, mitochondrial (Acaa2) of Mus musculus (Mouse).